Here is a 554-residue protein sequence, read N- to C-terminus: Phosphomethylpyrimidine synthase (554 aa).

Residues N188, M217, Y246, H282, 302-304 (SRG), 343-346 (DGLR), and E382 each bind substrate. Residue H386 participates in Zn(2+) binding. Substrate is bound at residue Y409. H450 contacts Zn(2+). [4Fe-4S] cluster-binding residues include C530, C533, and C538.

The protein belongs to the ThiC family. As to quaternary structure, homodimer. Requires [4Fe-4S] cluster as cofactor.

The enzyme catalyses 5-amino-1-(5-phospho-beta-D-ribosyl)imidazole + S-adenosyl-L-methionine = 4-amino-2-methyl-5-(phosphooxymethyl)pyrimidine + CO + 5'-deoxyadenosine + formate + L-methionine + 3 H(+). The protein operates within cofactor biosynthesis; thiamine diphosphate biosynthesis. Catalyzes the synthesis of the hydroxymethylpyrimidine phosphate (HMP-P) moiety of thiamine from aminoimidazole ribotide (AIR) in a radical S-adenosyl-L-methionine (SAM)-dependent reaction. This chain is Phosphomethylpyrimidine synthase, found in Coxiella burnetii (strain CbuK_Q154) (Coxiella burnetii (strain Q154)).